A 63-amino-acid polypeptide reads, in one-letter code: Large ribosomal subunit protein uL29 (63 aa).

The protein belongs to the universal ribosomal protein uL29 family.

In Sulfurovum sp. (strain NBC37-1), this protein is Large ribosomal subunit protein uL29.